The primary structure comprises 122 residues: Large ribosomal subunit protein uL14c (122 aa).

Belongs to the universal ribosomal protein uL14 family. As to quaternary structure, part of the 50S ribosomal subunit.

Its subcellular location is the plastid. It is found in the chloroplast. Its function is as follows. Binds to 23S rRNA. This is Large ribosomal subunit protein uL14c from Chara vulgaris (Common stonewort).